Here is a 99-residue protein sequence, read N- to C-terminus: Plastocyanin (99 aa).

Residues 1–99 (VEVLLGASDG…AGMVGQVTVN (99 aa)) form the Plastocyanin-like domain. Cu cation is bound by residues His37, Cys84, His87, and Met92.

This sequence belongs to the plastocyanin family. The cofactor is Cu(2+).

It is found in the plastid. The protein resides in the chloroplast thylakoid membrane. In terms of biological role, participates in electron transfer between P700 and the cytochrome b6-f complex in photosystem I. In Vicia faba (Broad bean), this protein is Plastocyanin (PETE).